The sequence spans 248 residues: HTH-type transcriptional regulator GgaR (248 aa).

The 69-residue stretch at 22–90 (TPLYIKFAET…RGYGTQINNI (69 aa)) folds into the HTH gntR-type domain. A DNA-binding region (H-T-H motif) is located at residues 50–69 (ERDLSQLTGVSRITVRKAMQ).

With respect to regulation, senses ADP-glucose (ADPG), which is the substrate for glycogen elongation, as an effector. In the presence of ADPG, GgaR becomes inactive and derepresses the yegTUV operon, leading to glycogen accumulation. In contrast, in the absence of glucose, the concentration of ADPG decreases, GgaR becomes active, and glycogen accumulation is repressed. Its function is as follows. Transcriptional regulator that regulates glycogen accumulation in response to the amount of glucose available to the cell. Acts as a repressor of the yegTUV operon, which may be involved in glycogen accumulation. This chain is HTH-type transcriptional regulator GgaR, found in Escherichia coli O6:H1 (strain CFT073 / ATCC 700928 / UPEC).